Consider the following 537-residue polypeptide: DEAD-box ATP-dependent RNA helicase 5 (537 aa).

A disordered region spans residues 1-97 (MAGQKQELPV…EDLGEGESEQ (97 aa)). Positions 22 to 80 (TNKKKKKSKKNKHTEENHEVEEVPQEVTNGVEEELSNKEKKKKRKREEKESEKNKKKDV) form a coiled coil. Over residues 23–33 (NKKKKKSKKNK) the composition is skewed to basic residues. Residues 68–87 (EEKESEKNKKKDVPEKKLEA) are compositionally biased toward basic and acidic residues. The Q motif signature appears at 116 to 142 (KTFAESNLPENVLDCCKTFEKPSPIQS). The 180-residue stretch at 145–324 (WPFLLDGRDL…QEFMDPNPIK (180 aa)) folds into the Helicase ATP-binding domain. An ATP-binding site is contributed by 158 to 165 (AKTGSGKT). Positions 272–275 (DEAD) match the DEAD box motif. Positions 349–500 (ARDQRLIALL…VVPADLLKFG (152 aa)) constitute a Helicase C-terminal domain. Phosphoserine is present on Ser-533.

It belongs to the DEAD box helicase family. DDX5/DBP2 subfamily.

The protein resides in the nucleus. It is found in the nucleolus. It catalyses the reaction ATP + H2O = ADP + phosphate + H(+). ATP-dependent RNA helicase required for 60S ribosomal subunit synthesis. Involved in efficient pre-rRNA processing, predominantly at site A3, which is necessary for the normal formation of 25S and 5.8S rRNAs. This chain is DEAD-box ATP-dependent RNA helicase 5 (RH5), found in Arabidopsis thaliana (Mouse-ear cress).